Reading from the N-terminus, the 276-residue chain is 4-hydroxy-tetrahydrodipicolinate reductase (276 aa).

16 to 21 (GALGKM) provides a ligand contact to NAD(+). Residue Lys44 coordinates NADP(+). NAD(+) is bound by residues 109–111 (GTT) and 135–138 (APNF). His165 serves as the catalytic Proton donor/acceptor. (S)-2,3,4,5-tetrahydrodipicolinate is bound at residue His166. The active-site Proton donor is Lys169. Position 175 to 176 (175 to 176 (GT)) interacts with (S)-2,3,4,5-tetrahydrodipicolinate.

Belongs to the DapB family.

The protein localises to the cytoplasm. It catalyses the reaction (S)-2,3,4,5-tetrahydrodipicolinate + NAD(+) + H2O = (2S,4S)-4-hydroxy-2,3,4,5-tetrahydrodipicolinate + NADH + H(+). The catalysed reaction is (S)-2,3,4,5-tetrahydrodipicolinate + NADP(+) + H2O = (2S,4S)-4-hydroxy-2,3,4,5-tetrahydrodipicolinate + NADPH + H(+). The protein operates within amino-acid biosynthesis; L-lysine biosynthesis via DAP pathway; (S)-tetrahydrodipicolinate from L-aspartate: step 4/4. Functionally, catalyzes the conversion of 4-hydroxy-tetrahydrodipicolinate (HTPA) to tetrahydrodipicolinate. This Thermosynechococcus vestitus (strain NIES-2133 / IAM M-273 / BP-1) protein is 4-hydroxy-tetrahydrodipicolinate reductase.